The primary structure comprises 701 residues: Vacuolar protein sorting-associated protein 52 B (701 aa).

Coiled coils occupy residues 23–45 (FEED…EECE) and 511–533 (QLDI…LAKL).

The protein belongs to the VPS52 family. As to quaternary structure, component of the Golgi-associated retrograde protein (GARP) complex. As to expression, detected in pollen.

The protein resides in the golgi apparatus. It localises to the trans-Golgi network membrane. Its subcellular location is the endosome membrane. It is found in the golgi apparatus membrane. Functionally, may be involved in retrograde transport of early and late endosomes to the late Golgi. The polypeptide is Vacuolar protein sorting-associated protein 52 B (P2) (Arabidopsis thaliana (Mouse-ear cress)).